Consider the following 339-residue polypeptide: MSYTAASQVVARQLAFFEGRKVLIAGELSDAYPVELANVAQSVAVFTTNFGYHNSMSRHDNIDCHFGVQLDAKLDIDMLLIYWPKAKAEADYLMSMLLAKFGPETEICIVGENRSGVRSAEKMFQPYGPLTKYDSARRCSFYWGRCDNEVKPFDLNDWFKSYPINVSGVELTVRSLPGVFSHGEFDNGSKLLINTLPSLRGKVLDFGCGAGVLGAIMKAKHPRIELELCDISALAIESAKETFKVNQLDAKFTATDVYSELKGPYNYLISNPPFHAGLKTFYTATENFIAQAPNYLFSDGQLIIVANSFLKYPELIEQSLETCNALANTNKFTIYSAKK.

This sequence belongs to the methyltransferase superfamily. RsmC family. As to quaternary structure, monomer.

It localises to the cytoplasm. It catalyses the reaction guanosine(1207) in 16S rRNA + S-adenosyl-L-methionine = N(2)-methylguanosine(1207) in 16S rRNA + S-adenosyl-L-homocysteine + H(+). Functionally, specifically methylates the guanine in position 1207 of 16S rRNA in the 30S particle. The chain is Ribosomal RNA small subunit methyltransferase C from Photobacterium profundum (strain SS9).